The following is a 105-amino-acid chain: Meiotically up-regulated gene 52 protein (105 aa).

In terms of biological role, has a role in meiosis. The protein is Meiotically up-regulated gene 52 protein (mug52) of Schizosaccharomyces pombe (strain 972 / ATCC 24843) (Fission yeast).